A 556-amino-acid polypeptide reads, in one-letter code: 2-succinyl-5-enolpyruvyl-6-hydroxy-3-cyclohexene-1-carboxylate synthase (556 aa).

Belongs to the TPP enzyme family. MenD subfamily. Homodimer. Requires Mg(2+) as cofactor. Mn(2+) serves as cofactor. The cofactor is thiamine diphosphate.

The catalysed reaction is isochorismate + 2-oxoglutarate + H(+) = 5-enolpyruvoyl-6-hydroxy-2-succinyl-cyclohex-3-ene-1-carboxylate + CO2. It participates in quinol/quinone metabolism; 1,4-dihydroxy-2-naphthoate biosynthesis; 1,4-dihydroxy-2-naphthoate from chorismate: step 2/7. It functions in the pathway quinol/quinone metabolism; menaquinone biosynthesis. Catalyzes the thiamine diphosphate-dependent decarboxylation of 2-oxoglutarate and the subsequent addition of the resulting succinic semialdehyde-thiamine pyrophosphate anion to isochorismate to yield 2-succinyl-5-enolpyruvyl-6-hydroxy-3-cyclohexene-1-carboxylate (SEPHCHC). The sequence is that of 2-succinyl-5-enolpyruvyl-6-hydroxy-3-cyclohexene-1-carboxylate synthase from Shigella boydii serotype 18 (strain CDC 3083-94 / BS512).